Here is a 127-residue protein sequence, read N- to C-terminus: Phospholipase A2 homolog otoconin-22 (127 aa).

N20 carries N-linked (GlcNAc...) asparagine glycosylation. 7 disulfides stabilise this stretch: C26–C120, C28–C44, C43–C99, C49–C127, C50–C92, C59–C85, and C78–C90. An N-linked (GlcNAc...) asparagine glycan is attached at N113.

Belongs to the phospholipase A2 family. As to quaternary structure, monomer. As to expression, otoconial membrane in the maculae of the saccule and utricle. Otoconia are composites of proteins and inorganic crystals formed in the peripheral portion of the vestibular system of vertebrates. The otoconial membranes contain small crystals of calcium carbonate known as otoliths (ear stones) if there is a single deposit or as otoconia (ear dust) if there are many. Each mineral polymorph of otoconia has a protein unique to that polymorph.

It localises to the secreted. In terms of biological role, major protein of the aragonitic otoconia. It is unlikely that this protein has phospholipase A2 activity. The polypeptide is Phospholipase A2 homolog otoconin-22 (Xenopus laevis (African clawed frog)).